The primary structure comprises 573 residues: DNA ligase (573 aa).

Position 250 (Glu250) interacts with ATP. Lys252 (N6-AMP-lysine intermediate) is an active-site residue. 6 residues coordinate ATP: Arg257, Arg272, Glu301, Phe342, Arg432, and Lys438.

It belongs to the ATP-dependent DNA ligase family. The cofactor is Mg(2+).

The enzyme catalyses ATP + (deoxyribonucleotide)n-3'-hydroxyl + 5'-phospho-(deoxyribonucleotide)m = (deoxyribonucleotide)n+m + AMP + diphosphate.. Functionally, DNA ligase that seals nicks in double-stranded DNA during DNA replication, DNA recombination and DNA repair. This chain is DNA ligase, found in Methanococcus maripaludis (strain C7 / ATCC BAA-1331).